Reading from the N-terminus, the 157-residue chain is Dihydrofolate reductase type 1 (157 aa).

The DHFR domain occupies 2-156 (KLSLMVAISK…INYSYQIWQK (155 aa)).

Belongs to the dihydrofolate reductase family. As to quaternary structure, homodimer.

The catalysed reaction is (6S)-5,6,7,8-tetrahydrofolate + NADP(+) = 7,8-dihydrofolate + NADPH + H(+). It functions in the pathway cofactor biosynthesis; tetrahydrofolate biosynthesis; 5,6,7,8-tetrahydrofolate from 7,8-dihydrofolate: step 1/1. Functionally, key enzyme in folate metabolism. Catalyzes an essential reaction for de novo glycine and purine synthesis, and for DNA precursor synthesis. This chain is Dihydrofolate reductase type 1 (dhfrI), found in Escherichia coli.